Here is a 412-residue protein sequence, read N- to C-terminus: Membrane fusion protein MtrC (412 aa).

An N-terminal signal peptide occupies residues 1-24; sequence MAFYASKAMRAAALAAAVALALSS. Residue C25 is the site of N-palmitoyl cysteine attachment. Residue C25 is the site of S-diacylglycerol cysteine attachment. The segment at 377-412 is disordered; sequence AKKVTPKEWAPSENQAAAPQAGVQTASEAKPASEAK. A compositionally biased stretch (polar residues) spans 388-403; it reads SENQAAAPQAGVQTAS.

The protein belongs to the membrane fusion protein (MFP) (TC 8.A.1) family.

The protein resides in the cell inner membrane. Its function is as follows. Cell membrane lipoprotein, involved in cell membrane permeability to hydrophobic compounds such as antibiotics, dyes and detergents. The sequence is that of Membrane fusion protein MtrC (mtrC) from Neisseria gonorrhoeae.